The sequence spans 216 residues: Fibroblast growth factor 17 (216 aa).

The signal sequence occupies residues 1–22; that stretch reads MGAARLLPNLTLCLQLLILCCQ. The N-linked (GlcNAc...) asparagine glycan is linked to N137. The tract at residues 190 to 216 is disordered; it reads EKQKQFEFVGSAPTRRTKRTRRPQPLT. Positions 204–216 are enriched in basic residues; the sequence is RRTKRTRRPQPLT.

This sequence belongs to the heparin-binding growth factors family. In terms of assembly, interacts with FGFR3 and FGFR4. As to expression, preferentially expressed in the embryonic brain.

It is found in the secreted. In terms of biological role, plays an important role in the regulation of embryonic development and as signaling molecule in the induction and patterning of the embryonic brain. Required for normal brain development. This is Fibroblast growth factor 17 (FGF17) from Homo sapiens (Human).